The primary structure comprises 318 residues: NADH-ubiquinone oxidoreductase chain 1 (318 aa).

Helical transmembrane passes span 2–22 (FTIN…FLTL), 70–90 (MFII…IPLP), 100–120 (LGVL…LWSG), 146–166 (LAII…STLI), 171–191 (HLWL…STLA), 222–242 (LFFM…TILF), 254–276 (LYTI…IRAS), and 294–314 (LPLT…TSSI).

This sequence belongs to the complex I subunit 1 family. Core subunit of respiratory chain NADH dehydrogenase (Complex I) which is composed of 45 different subunits.

It is found in the mitochondrion inner membrane. It carries out the reaction a ubiquinone + NADH + 5 H(+)(in) = a ubiquinol + NAD(+) + 4 H(+)(out). Functionally, core subunit of the mitochondrial membrane respiratory chain NADH dehydrogenase (Complex I) which catalyzes electron transfer from NADH through the respiratory chain, using ubiquinone as an electron acceptor. Essential for the catalytic activity and assembly of complex I. The polypeptide is NADH-ubiquinone oxidoreductase chain 1 (MT-ND1) (Ceratotherium simum (White rhinoceros)).